We begin with the raw amino-acid sequence, 433 residues long: Acetylcholine receptor-like protein cup-4 (433 aa).

An N-terminal signal peptide occupies residues 1 to 24 (MKIIIFVCFILIFYLPIQKKHVNS). 2 N-linked (GlcNAc...) asparagine glycosylation sites follow: Asn-41 and Asn-68. A disulfide bond links Cys-178 and Cys-192. Residues Asn-237 and Asn-249 are each glycosylated (N-linked (GlcNAc...) asparagine). 4 helical membrane-spanning segments follow: residues 282 to 302 (EAAV…TFFI), 307 to 327 (STFL…HDLV), 337 to 357 (IPFC…TLVL), and 413 to 433 (PIIG…CLLL).

It belongs to the ligand-gated ion channel (TC 1.A.9) family. Acetylcholine receptor (TC 1.A.9.1) subfamily. Expressed in coelomocytes.

Its subcellular location is the cytoplasmic vesicle membrane. Its function is as follows. Thought to regulate endocytosis in coelomocytes through modulation of phospholipase C activity. Possible acetylcholine receptor. This Caenorhabditis elegans protein is Acetylcholine receptor-like protein cup-4 (cup-4).